The chain runs to 162 residues: Caveolin-2 (162 aa).

Residues 1 to 86 (MGLETEKADV…FEISKYVIYK (86 aa)) are Cytoplasmic-facing. Tyrosine 19 carries the phosphotyrosine; by SRC modification. Serine 20 and serine 23 each carry phosphoserine. Residue tyrosine 27 is modified to Phosphotyrosine; by SRC. At serine 36 the chain carries Phosphoserine. Residues 87–107 (FLTVFLAIPLAFIAGILFATL) constitute an intramembrane region (helical). Topologically, residues 108 to 162 (SCLHIWILMPFVKTCLMVLPSVQTIWKSVTDVVIGPLCTSVGRIFSSVSMQLSHD) are cytoplasmic.

Belongs to the caveolin family. As to quaternary structure, monomer or homodimer. Interacts with CAV1; the interaction forms a stable heterooligomeric complex that is required for targeting to lipid rafts and for caveolae formation. Tyrosine phosphorylated forms do not form heterooligomers with the Tyr-19-phosphorylated form existing as a monomer or dimer and the Tyr-27-form as a monomer only. Interacts (tyrosine phosphorylated form) with the SH2 domain-containing proteins, RASA1, NCK1 and SRC. Interacts (tyrosine phosphorylated form) with INSR; the interaction (Tyr-27-phosphorylated form) is increased on insulin stimulation. Interacts (Tyr-19-phosphorylated form) with MAPK1 (phosphorylated form); the interaction, promoted by insulin, leads to nuclear location and MAPK1 activation. Interacts with STAT3; the interaction is increased on insulin-induced tyrosine phosphorylation leading to STAT activation. Post-translationally, phosphorylated on serine and tyrosine residues. CAV1 promotes phosphorylation on Ser-23 which targets the complex to the plasma membrane, lipid rafts and caveolae. Phosphorylation on Ser-36 appears to modulate mitosis in endothelial cells. Phosphorylation on both Tyr-19 and Tyr-27 is required for insulin-induced 'Ser-727' phosphorylation of STAT3 and its activation. Phosphorylation on Tyr-19 is required for insulin-induced phosphorylation of MAPK1 and DNA binding of STAT3. Tyrosine phosphorylation is induced by both EGF and insulin. In terms of tissue distribution, in the retina, mainly expressed in vessels, but also diffuse expression in the inner and outer plexiform layers and in the inner nuclear layer.

It is found in the nucleus. The protein resides in the cytoplasm. It localises to the golgi apparatus membrane. Its subcellular location is the cell membrane. The protein localises to the membrane. It is found in the caveola. In terms of biological role, may act as a scaffolding protein within caveolar membranes. Interacts directly with G-protein alpha subunits and can functionally regulate their activity. Acts as an accessory protein in conjunction with CAV1 in targeting to lipid rafts and driving caveolae formation. The Ser-36 phosphorylated form has a role in modulating mitosis in endothelial cells. Positive regulator of cellular mitogenesis of the MAPK signaling pathway. Required for the insulin-stimulated nuclear translocation and activation of MAPK1 and STAT3, and the subsequent regulation of cell cycle progression. The sequence is that of Caveolin-2 (Cav2) from Rattus norvegicus (Rat).